The sequence spans 419 residues: Dynein regulatory complex protein 9 (419 aa).

Disordered regions lie at residues 1 to 47 and 393 to 419; these read MEGE…SPEV and SFKM…RGKK. The segment covering 34–44 has biased composition (acidic residues); it reads EELEEEEEETS. Positions 371-400 constitute an IQ domain; the sequence is ELRSIVKLQAWWRGTVVRREIGSFKMPKKE.

This sequence belongs to the DRC9 family. Component of the nexin-dynein regulatory complex (N-DRC). Interacts (via IQ domain) with CALM when calcium levels are low. Does not interact with CALM in the presence of Ca(2+). Interacts with the HSP70 proteins HSPA1L and HSPA8. May form a complex with CAMK4 and HSP70.

It is found in the cytoplasm. It localises to the cell projection. The protein localises to the cilium. The protein resides in the flagellum. Its subcellular location is the cytoskeleton. It is found in the flagellum axoneme. In terms of biological role, component of the nexin-dynein regulatory complex (N-DRC), a key regulator of ciliary/flagellar motility which maintains the alignment and integrity of the distal axoneme and regulates microtubule sliding in motile axonemes. Binds calmodulin when cellular Ca(2+) levels are low and thereby contributes to the regulation of calcium and calmodulin-dependent protein kinase IV (CAMK4) activity; contributes to the regulation of CAMK4 signaling cascades. Required for normal axoneme assembly in sperm flagella, normal sperm tail formation and for male fertility. The protein is Dynein regulatory complex protein 9 (Iqcg) of Rattus norvegicus (Rat).